Consider the following 415-residue polypeptide: tRNA(Met) cytidine acetate ligase (415 aa).

ATP is bound by residues 7–20, glycine 102, asparagine 165, and 190–191; these read IVEY…HLYH and RI.

This sequence belongs to the TmcAL family.

It localises to the cytoplasm. The enzyme catalyses cytidine(34) in elongator tRNA(Met) + acetate + ATP = N(4)-acetylcytidine(34) in elongator tRNA(Met) + AMP + diphosphate. In terms of biological role, catalyzes the formation of N(4)-acetylcytidine (ac(4)C) at the wobble position of elongator tRNA(Met), using acetate and ATP as substrates. First activates an acetate ion to form acetyladenylate (Ac-AMP) and then transfers the acetyl group to tRNA to form ac(4)C34. The sequence is that of tRNA(Met) cytidine acetate ligase from Acetivibrio thermocellus (strain ATCC 27405 / DSM 1237 / JCM 9322 / NBRC 103400 / NCIMB 10682 / NRRL B-4536 / VPI 7372) (Clostridium thermocellum).